Here is a 161-residue protein sequence, read N- to C-terminus: ATP synthase subunit b 1 (161 aa).

Residues 3 to 23 (LDATFYALVGLILFFVLIAYL) traverse the membrane as a helical segment.

This sequence belongs to the ATPase B chain family. F-type ATPases have 2 components, F(1) - the catalytic core - and F(0) - the membrane proton channel. F(1) has five subunits: alpha(3), beta(3), gamma(1), delta(1), epsilon(1). F(0) has three main subunits: a(1), b(2) and c(10-14). The alpha and beta chains form an alternating ring which encloses part of the gamma chain. F(1) is attached to F(0) by a central stalk formed by the gamma and epsilon chains, while a peripheral stalk is formed by the delta and b chains.

The protein resides in the cell inner membrane. Its function is as follows. F(1)F(0) ATP synthase produces ATP from ADP in the presence of a proton or sodium gradient. F-type ATPases consist of two structural domains, F(1) containing the extramembraneous catalytic core and F(0) containing the membrane proton channel, linked together by a central stalk and a peripheral stalk. During catalysis, ATP synthesis in the catalytic domain of F(1) is coupled via a rotary mechanism of the central stalk subunits to proton translocation. In terms of biological role, component of the F(0) channel, it forms part of the peripheral stalk, linking F(1) to F(0). This is ATP synthase subunit b 1 from Rhizobium meliloti (strain 1021) (Ensifer meliloti).